The sequence spans 40 residues: Photosystem II reaction center protein J (40 aa).

The chain crosses the membrane as a helical span at residues I8–F28.

Belongs to the PsbJ family. As to quaternary structure, PSII is composed of 1 copy each of membrane proteins PsbA, PsbB, PsbC, PsbD, PsbE, PsbF, PsbH, PsbI, PsbJ, PsbK, PsbL, PsbM, PsbT, PsbX, PsbY, PsbZ, Psb30/Ycf12, at least 3 peripheral proteins of the oxygen-evolving complex and a large number of cofactors. It forms dimeric complexes.

The protein localises to the plastid. It localises to the chloroplast thylakoid membrane. In terms of biological role, one of the components of the core complex of photosystem II (PSII). PSII is a light-driven water:plastoquinone oxidoreductase that uses light energy to abstract electrons from H(2)O, generating O(2) and a proton gradient subsequently used for ATP formation. It consists of a core antenna complex that captures photons, and an electron transfer chain that converts photonic excitation into a charge separation. The protein is Photosystem II reaction center protein J of Vitis vinifera (Grape).